Consider the following 196-residue polypeptide: Probable nicotinate-nucleotide adenylyltransferase (196 aa).

The protein belongs to the NadD family.

The enzyme catalyses nicotinate beta-D-ribonucleotide + ATP + H(+) = deamido-NAD(+) + diphosphate. It participates in cofactor biosynthesis; NAD(+) biosynthesis; deamido-NAD(+) from nicotinate D-ribonucleotide: step 1/1. Functionally, catalyzes the reversible adenylation of nicotinate mononucleotide (NaMN) to nicotinic acid adenine dinucleotide (NaAD). The sequence is that of Probable nicotinate-nucleotide adenylyltransferase from Caldicellulosiruptor saccharolyticus (strain ATCC 43494 / DSM 8903 / Tp8T 6331).